A 388-amino-acid polypeptide reads, in one-letter code: Succinate--CoA ligase [ADP-forming] subunit beta (388 aa).

One can recognise an ATP-grasp domain in the interval 9–244; that stretch reads KQLFARYGLP…QSQEDPREAQ (236 aa). ATP is bound by residues Lys-46, 53–55, Glu-99, Thr-102, and Glu-107; that span reads GRG. Positions 199 and 213 each coordinate Mg(2+). Residues Asn-264 and 321–323 contribute to the substrate site; that span reads GIV.

The protein belongs to the succinate/malate CoA ligase beta subunit family. In terms of assembly, heterotetramer of two alpha and two beta subunits. The cofactor is Mg(2+).

The enzyme catalyses succinate + ATP + CoA = succinyl-CoA + ADP + phosphate. It carries out the reaction GTP + succinate + CoA = succinyl-CoA + GDP + phosphate. The protein operates within carbohydrate metabolism; tricarboxylic acid cycle; succinate from succinyl-CoA (ligase route): step 1/1. Its function is as follows. Succinyl-CoA synthetase functions in the citric acid cycle (TCA), coupling the hydrolysis of succinyl-CoA to the synthesis of either ATP or GTP and thus represents the only step of substrate-level phosphorylation in the TCA. The beta subunit provides nucleotide specificity of the enzyme and binds the substrate succinate, while the binding sites for coenzyme A and phosphate are found in the alpha subunit. The sequence is that of Succinate--CoA ligase [ADP-forming] subunit beta from Klebsiella pneumoniae (strain 342).